Here is a 221-residue protein sequence, read N- to C-terminus: Probable chemoreceptor glutamine deamidase CheD 1 (221 aa).

Belongs to the CheD family.

The catalysed reaction is L-glutaminyl-[protein] + H2O = L-glutamyl-[protein] + NH4(+). In terms of biological role, probably deamidates glutamine residues to glutamate on methyl-accepting chemotaxis receptors (MCPs), playing an important role in chemotaxis. This is Probable chemoreceptor glutamine deamidase CheD 1 from Methanosarcina mazei (strain ATCC BAA-159 / DSM 3647 / Goe1 / Go1 / JCM 11833 / OCM 88) (Methanosarcina frisia).